The following is a 162-amino-acid chain: 6,7-dimethyl-8-ribityllumazine synthase (162 aa).

5-amino-6-(D-ribitylamino)uracil is bound by residues Phe-22, 56–58, and 80–82; these read TFE and AVI. Residue 85–86 participates in (2S)-2-hydroxy-3-oxobutyl phosphate binding; the sequence is GT. Catalysis depends on His-88, which acts as the Proton donor. 5-amino-6-(D-ribitylamino)uracil is bound at residue Met-113. Residue Arg-127 coordinates (2S)-2-hydroxy-3-oxobutyl phosphate.

The protein belongs to the DMRL synthase family.

It carries out the reaction (2S)-2-hydroxy-3-oxobutyl phosphate + 5-amino-6-(D-ribitylamino)uracil = 6,7-dimethyl-8-(1-D-ribityl)lumazine + phosphate + 2 H2O + H(+). The protein operates within cofactor biosynthesis; riboflavin biosynthesis; riboflavin from 2-hydroxy-3-oxobutyl phosphate and 5-amino-6-(D-ribitylamino)uracil: step 1/2. Its function is as follows. Catalyzes the formation of 6,7-dimethyl-8-ribityllumazine by condensation of 5-amino-6-(D-ribitylamino)uracil with 3,4-dihydroxy-2-butanone 4-phosphate. This is the penultimate step in the biosynthesis of riboflavin. The chain is 6,7-dimethyl-8-ribityllumazine synthase from Anaeromyxobacter dehalogenans (strain 2CP-C).